Consider the following 141-residue polypeptide: Hemoglobin subunit alpha (141 aa).

Residues 1–141 (VLSPADKSNV…VSTVLVSKYR (141 aa)) form the Globin domain. Phosphoserine is present on serine 3. An N6-succinyllysine mark is found at lysine 7 and lysine 11. Residue lysine 16 is modified to N6-acetyllysine; alternate. Lysine 16 carries the N6-succinyllysine; alternate modification. Phosphotyrosine is present on tyrosine 24. The residue at position 35 (serine 35) is a Phosphoserine. At lysine 40 the chain carries N6-succinyllysine. A Phosphoserine modification is found at serine 49. Histidine 58 contacts O2. Histidine 87 lines the heme b pocket. Position 102 is a phosphoserine (serine 102). A Phosphothreonine modification is found at threonine 108. Serine 124 carries the post-translational modification Phosphoserine. Threonine 134 is subject to Phosphothreonine. Serine 138 is modified (phosphoserine).

Belongs to the globin family. Heterotetramer of two alpha chains and two beta chains. Red blood cells.

Involved in oxygen transport from the lung to the various peripheral tissues. Functionally, hemopressin acts as an antagonist peptide of the cannabinoid receptor CNR1. Hemopressin-binding efficiently blocks cannabinoid receptor CNR1 and subsequent signaling. This is Hemoglobin subunit alpha (HBA) from Chalinolobus morio (Chocolate-wattled bat).